A 218-amino-acid polypeptide reads, in one-letter code: 3,4-dihydroxy-2-butanone 4-phosphate synthase (218 aa).

D-ribulose 5-phosphate-binding positions include 38–39 (RE), Asp-43, 151–155 (RRGHT), and Glu-175. Mg(2+) is bound at residue Glu-39. Residue His-154 participates in Mg(2+) binding.

It belongs to the DHBP synthase family. In terms of assembly, homodimer. Mg(2+) is required as a cofactor. The cofactor is Mn(2+).

It carries out the reaction D-ribulose 5-phosphate = (2S)-2-hydroxy-3-oxobutyl phosphate + formate + H(+). It participates in cofactor biosynthesis; riboflavin biosynthesis; 2-hydroxy-3-oxobutyl phosphate from D-ribulose 5-phosphate: step 1/1. In terms of biological role, catalyzes the conversion of D-ribulose 5-phosphate to formate and 3,4-dihydroxy-2-butanone 4-phosphate. The protein is 3,4-dihydroxy-2-butanone 4-phosphate synthase of Vibrio vulnificus (strain CMCP6).